Reading from the N-terminus, the 469-residue chain is Ribulose bisphosphate carboxylase large chain (469 aa).

Residues 1–2 (MS) constitute a propeptide that is removed on maturation. P3 is subject to N-acetylproline. At K14 the chain carries N6,N6,N6-trimethyllysine. Substrate contacts are provided by N123 and T173. K175 serves as the catalytic Proton acceptor. K177 contributes to the substrate binding site. Positions 201, 203, and 204 each coordinate Mg(2+). K201 carries the N6-carboxylysine modification. The active-site Proton acceptor is the H294. The substrate site is built by R295, H327, and S379.

Belongs to the RuBisCO large chain family. Type I subfamily. In terms of assembly, heterohexadecamer of 8 large chains and 8 small chains; disulfide-linked. The disulfide link is formed within the large subunit homodimers. Mg(2+) serves as cofactor. The disulfide bond which can form in the large chain dimeric partners within the hexadecamer appears to be associated with oxidative stress and protein turnover.

It is found in the plastid. Its subcellular location is the chloroplast. The enzyme catalyses 2 (2R)-3-phosphoglycerate + 2 H(+) = D-ribulose 1,5-bisphosphate + CO2 + H2O. The catalysed reaction is D-ribulose 1,5-bisphosphate + O2 = 2-phosphoglycolate + (2R)-3-phosphoglycerate + 2 H(+). Its function is as follows. RuBisCO catalyzes two reactions: the carboxylation of D-ribulose 1,5-bisphosphate, the primary event in carbon dioxide fixation, as well as the oxidative fragmentation of the pentose substrate in the photorespiration process. Both reactions occur simultaneously and in competition at the same active site. The sequence is that of Ribulose bisphosphate carboxylase large chain from Brexia madagascariensis.